We begin with the raw amino-acid sequence, 545 residues long: Capsular polysaccharide phosphotransferase SacB (545 aa).

Belongs to the stealth family.

May be the polymerase that links individual UDP-N-acetyl-D-mannosamine monomers. In serotype A the capsule is composed of repeated units of (alpha 1-6)-linked N-acetyl-D-mannosamine-1-phosphate. The polypeptide is Capsular polysaccharide phosphotransferase SacB (sacB) (Neisseria meningitidis serogroup A).